The chain runs to 273 residues: Kit ligand (273 aa).

The signal sequence occupies residues 1–25 (MKKTQTWILTCIYLQLLLFNPLVKT). The Extracellular portion of the chain corresponds to 26–214 (EGICRNRVTN…KNPPGDSSLH (189 aa)). Disulfide bonds link Cys-29/Cys-114 and Cys-68/Cys-163. Residues Asn-90 and Asn-118 are each glycosylated (N-linked (GlcNAc...) asparagine; partial). N-linked (GlcNAc...) asparagine glycosylation occurs at Asn-145. An O-linked (GalNAc...) serine glycan is attached at Ser-167. 2 O-linked (GalNAc...) threonine glycosylation sites follow: Thr-168 and Thr-180. Asn-195 is a glycosylation site (N-linked (GlcNAc...) asparagine). A helical membrane pass occupies residues 215–237 (WAAMALPALFSLIIGFAFGALYW). Residues 238-273 (KKRQPSLTRAVENIQINEEDNEISMLQEKEREFQEV) are Cytoplasmic-facing.

Belongs to the SCF family. As to quaternary structure, homodimer, non-covalently linked. Heterotetramer with KIT, binding two KIT molecules; thereby mediates KIT dimerization and subsequent activation by autophosphorylation. A soluble form (sKITLG) is produced by proteolytic processing of isoform 1 in the extracellular domain. In terms of processing, found in two differentially glycosylated forms, LMW-SCF and HMW-SCF. LMW-SCF is fully N-glycosylated at Asn-145, partially N-glycosylated at Asn-90, O-glycosylated at Ser-167, Thr-168 and Thr-180, and not glycosylated at Asn-97 or Asn-118. HMW-SCF is N-glycosylated at Asn-118, Asn-90 and Asn-145, O-glycosylated at Ser-167, Thr-168 and Thr-180, and not glycosylated at Asn-97. Post-translationally, a soluble form exists as a cleavage product of the extracellular domain.

The protein localises to the cell membrane. It is found in the cytoplasm. It localises to the cytoskeleton. Its subcellular location is the cell projection. The protein resides in the lamellipodium. The protein localises to the filopodium. It is found in the secreted. Its function is as follows. Ligand for the receptor-type protein-tyrosine kinase KIT. Plays an essential role in the regulation of cell survival and proliferation, hematopoiesis, stem cell maintenance, gametogenesis, mast cell development, migration and function, and in melanogenesis. KITLG/SCF binding can activate several signaling pathways. Promotes phosphorylation of PIK3R1, the regulatory subunit of phosphatidylinositol 3-kinase, and subsequent activation of the kinase AKT1. KITLG/SCF and KIT also transmit signals via GRB2 and activation of RAS, RAF1 and the MAP kinases MAPK1/ERK2 and/or MAPK3/ERK1. KITLG/SCF and KIT promote activation of STAT family members STAT1, STAT3 and STAT5. KITLG/SCF and KIT promote activation of PLCG1, leading to the production of the cellular signaling molecules diacylglycerol and inositol 1,4,5-trisphosphate. KITLG/SCF acts synergistically with other cytokines, probably interleukins. This chain is Kit ligand, found in Homo sapiens (Human).